Reading from the N-terminus, the 63-residue chain is Conotoxin Lt11.1 (63 aa).

Positions 1–23 are cleaved as a signal peptide; that stretch reads MMFRLTSVLLVIVLLNLVVLTNA. 4 disulfide bridges follow: C24–C34, C28–C39, C33–C42, and C38–C47. Residues 53-63 constitute a propeptide that is removed on maturation; the sequence is ALLQRLLGHQR.

Belongs to the conotoxin I2 superfamily. As to expression, expressed by the venom duct.

The protein localises to the secreted. This Conus litteratus (Lettered cone) protein is Conotoxin Lt11.1.